A 374-amino-acid polypeptide reads, in one-letter code: Amino acid binding protein (374 aa).

The first 27 residues, 1-27 (MSKKLFRKGILALAVSSVMGLSTHALA), serve as a signal peptide directing secretion.

This sequence belongs to the leucine-binding protein family.

It localises to the periplasm. Binds primarily proteinogenic amino acids. This chain is Amino acid binding protein, found in Pseudomonas aeruginosa (strain ATCC 15692 / DSM 22644 / CIP 104116 / JCM 14847 / LMG 12228 / 1C / PRS 101 / PAO1).